The following is a 409-amino-acid chain: tRNA(Met) cytidine acetate ligase (409 aa).

ATP is bound by residues 7 to 20 (VVEY…HLYH), Gly102, Asn169, and Arg194.

This sequence belongs to the TmcAL family.

The protein resides in the cytoplasm. It carries out the reaction cytidine(34) in elongator tRNA(Met) + acetate + ATP = N(4)-acetylcytidine(34) in elongator tRNA(Met) + AMP + diphosphate. In terms of biological role, catalyzes the formation of N(4)-acetylcytidine (ac(4)C) at the wobble position of elongator tRNA(Met), using acetate and ATP as substrates. First activates an acetate ion to form acetyladenylate (Ac-AMP) and then transfers the acetyl group to tRNA to form ac(4)C34. The chain is tRNA(Met) cytidine acetate ligase from Clostridium botulinum (strain ATCC 19397 / Type A).